The following is an 821-amino-acid chain: Calpain-3 (821 aa).

Positions 7–37 (ASVAPRTAAEPRSPGPVPHPAQSKATEAGGG) are disordered. Positions 74 to 417 (LYVDPEFPPD…FTKLEICNLT (344 aa)) constitute a Calpain catalytic domain. Catalysis depends on residues C129, H334, and N358. Residues 418–586 (ADALQSDKLQ…KRNLSEEVEN (169 aa)) are domain III. Positions 587–649 (TISVDRPVKK…QPGSSDQESE (63 aa)) are linker. The tract at residues 609-652 (ANSNKELGVDQESEEGKGKTSPDKQKQSPQPQPGSSDQESEEQQ) is disordered. Over residues 622–634 (EEGKGKTSPDKQK) the composition is skewed to basic and acidic residues. Over residues 635 to 645 (QSPQPQPGSSD) the composition is skewed to low complexity. 4 consecutive EF-hand domains span residues 649 to 683 (EEQQ…VVNK), 692 to 725 (FTLE…NKIK), 722 to 757 (NKIK…AGFH), and 787 to 821 (VRLE…TMYA). Residues 650 to 821 (EQQQFRNIFK…LEWLQLTMYA (172 aa)) are domain IV. Ca(2+) contacts are provided by A662, D665, E667, E672, D705, D707, S709, K711, E716, D735, D737, S739, T741, E746, D800, D802, D804, and I806.

Belongs to the peptidase C2 family. As to quaternary structure, homodimer; via EF-hand domain 4. Interacts with TTN/titin. Interacts with CMYA5; this interaction, which results in CMYA5 proteolysis, may protect CAPN3 from autolysis. Interacts with SIMC1. Interacts with UTP25; the interaction is required for CAPN3 translocation to the nucleolus. In terms of tissue distribution, isoform I is skeletal muscle specific.

It localises to the cytoplasm. The protein localises to the nucleus. It is found in the nucleolus. It catalyses the reaction Broad endopeptidase activity.. Its activity is regulated as follows. Activated by micromolar concentrations of calcium and inhibited by calpastatin. Calcium-regulated non-lysosomal thiol-protease. Proteolytically cleaves CTBP1 at 'His-409'. Mediates, with UTP25, the proteasome-independent degradation of p53/TP53. In Homo sapiens (Human), this protein is Calpain-3.